The chain runs to 596 residues: Protein kinase C iota type (596 aa).

Residues 1-12 are compositionally biased toward polar residues; sequence MPTQRDSSTMSH. Positions 1 to 23 are disordered; sequence MPTQRDSSTMSHTVAGGGSGDHS. The residue at position 2 (P2) is an N-acetylproline. The required for interaction with RAB2 stretch occupies residues 2–28; that stretch reads PTQRDSSTMSHTVAGGGSGDHSHQVRV. A regulatory domain region spans residues 2 to 253; sequence PTQRDSSTMS…KASSSLGLQD (252 aa). T3 carries the phosphothreonine modification. 2 positions are modified to phosphoserine: S7 and S8. T9 carries the phosphothreonine modification. In terms of domain architecture, PB1 spans 25 to 108; sequence QVRVKAYYRG…SELLIHVFPC (84 aa). The tract at residues 72–91 is interaction with PARD6A; that stretch reads DEEGDPCTVSSQLELEEAFR. The Pseudosubstrate signature appears at 125 to 134; the sequence is YRRGARRWRK. The Phorbol-ester/DAG-type zinc finger occupies 140 to 190; sequence GHTFQAKRFNRRAHCAICTDRIWGLGRQGYKCINCKLLVHKKCHKLVTIEC. The segment at 221–246 is disordered; the sequence is PSSHESLDQVGEEKEAMNTRESGKAS. A compositionally biased stretch (basic and acidic residues) spans 225-243; that stretch reads ESLDQVGEEKEAMNTRESG. Positions 254–522 constitute a Protein kinase domain; it reads FDLLRVIGRG…FADIQGHPFF (269 aa). Residue 260–268 participates in ATP binding; the sequence is IGRGSYAKV. A phosphotyrosine; by SRC mark is found at Y265 and Y280. An ATP-binding site is contributed by K283. Y334 is modified (phosphotyrosine; by SRC). D378 serves as the catalytic Proton acceptor. Phosphothreonine; by PDPK1 is present on T412. Positions 523-594 constitute an AGC-kinase C-terminal domain; sequence RNVDWDMMEQ…INPLLMSAEE (72 aa). Position 564 is a phosphothreonine (T564).

The protein belongs to the protein kinase superfamily. AGC Ser/Thr protein kinase family. PKC subfamily. In terms of assembly, forms a complex with SQSTM1 and MP2K5. Interacts directly with SQSTM1. Interacts with IKBKB. Interacts with PARD6A, PARD6B and PARD6G. Part of a quaternary complex containing aPKC, PARD3, a PARD6 protein (PARD6A, PARD6B or PARD6G) and a GTPase protein (CDC42 or RAC1). Part of a complex with LLGL1 and PARD6B. Interacts with ADAP1/CENTA1. Interaction with SMG1, through the ZN-finger domain, activates the kinase activity. Interacts with CDK7. Forms a complex with RAB2A and GAPDH involved in recruitment onto the membrane of vesicular tubular clusters (VTCs). Interacts with ECT2 ('Thr-359' phosphorylated form). Interacts with VAMP2. Interacts with WDFY2 (via WD repeats 1-3). Phosphorylation at Thr-412 in the activation loop is not mandatory for activation. Upon neuronal growth factor (NGF) stimulation, phosphorylated by SRC at Tyr-265, Tyr-280 and Tyr-334. Phosphorylation at Tyr-265 facilitates binding to KPNB1/importin-beta regulating entry of PRKCI into the nucleus. Phosphorylation on Tyr-334 is important for NF-kappa-B stimulation. Phosphorylated at Thr-564 during the initial phase of long term potentiation.

It localises to the cytoplasm. It is found in the membrane. The protein resides in the endosome. Its subcellular location is the nucleus. The enzyme catalyses L-seryl-[protein] + ATP = O-phospho-L-seryl-[protein] + ADP + H(+). It catalyses the reaction L-threonyl-[protein] + ATP = O-phospho-L-threonyl-[protein] + ADP + H(+). Atypical PKCs (PRKCI and PRKCZ) exhibit an elevated basal enzymatic activity (that may be due to the interaction with SMG1 or SQSTM1) and are not regulated by diacylglycerol, phosphatidylserine, phorbol esters or calcium ions. Two specific sites, Thr-412 (activation loop of the kinase domain) and Thr-564 (turn motif), need to be phosphorylated for its full activation. Might also be a target for novel lipid activators that are elevated during nutrient-stimulated insulin secretion. In terms of biological role, calcium- and diacylglycerol-independent serine/ threonine-protein kinase that plays a general protective role against apoptotic stimuli, is involved in NF-kappa-B activation, cell survival, differentiation and polarity, and contributes to the regulation of microtubule dynamics in the early secretory pathway. Is necessary for BCR-ABL oncogene-mediated resistance to apoptotic drug in leukemia cells, protecting leukemia cells against drug-induced apoptosis. In cultured neurons, prevents amyloid beta protein-induced apoptosis by interrupting cell death process at a very early step. In glioblastoma cells, may function downstream of phosphatidylinositol 3-kinase (PI(3)K) and PDPK1 in the promotion of cell survival by phosphorylating and inhibiting the pro-apoptotic factor BAD. Can form a protein complex in non-small cell lung cancer (NSCLC) cells with PARD6A and ECT2 and regulate ECT2 oncogenic activity by phosphorylation, which in turn promotes transformed growth and invasion. In response to nerve growth factor (NGF), acts downstream of SRC to phosphorylate and activate IRAK1, allowing the subsequent activation of NF-kappa-B and neuronal cell survival. Functions in the organization of the apical domain in epithelial cells by phosphorylating EZR. This step is crucial for activation and normal distribution of EZR at the early stages of intestinal epithelial cell differentiation. Forms a protein complex with LLGL1 and PARD6B independently of PARD3 to regulate epithelial cell polarity. Plays a role in microtubule dynamics in the early secretory pathway through interaction with RAB2A and GAPDH and recruitment to vesicular tubular clusters (VTCs). In human coronary artery endothelial cells (HCAEC), is activated by saturated fatty acids and mediates lipid-induced apoptosis. Involved in early synaptic long term potentiation phase in CA1 hippocampal cells and short term memory formation. This chain is Protein kinase C iota type (PRKCI), found in Pongo abelii (Sumatran orangutan).